Reading from the N-terminus, the 582-residue chain is ATP-dependent lipid A-core flippase (582 aa).

Helical transmembrane passes span Leu-16 to Ile-36, Phe-69 to Met-89, Ile-153 to Val-173, Leu-250 to Ala-270, and Ile-275 to Leu-295. One can recognise an ABC transmembrane type-1 domain in the interval Val-29–Arg-310. The region spanning Ile-342 to Ile-578 is the ABC transporter domain. Gly-376–Ser-383 is a binding site for ATP.

Belongs to the ABC transporter superfamily. Lipid exporter (TC 3.A.1.106) family. In terms of assembly, homodimer.

It is found in the cell inner membrane. The enzyme catalyses ATP + H2O + lipid A-core oligosaccharideSide 1 = ADP + phosphate + lipid A-core oligosaccharideSide 2.. Involved in lipopolysaccharide (LPS) biosynthesis. Translocates lipid A-core from the inner to the outer leaflet of the inner membrane. Transmembrane domains (TMD) form a pore in the inner membrane and the ATP-binding domain (NBD) is responsible for energy generation. This Aliivibrio fischeri (strain ATCC 700601 / ES114) (Vibrio fischeri) protein is ATP-dependent lipid A-core flippase.